Here is a 691-residue protein sequence, read N- to C-terminus: Ubiquitin-like domain-containing protein CIP73 (691 aa).

The 76-residue stretch at 22–97 (IEIKIKMLDS…LHLVARHPDL (76 aa)) folds into the Ubiquitin-like domain. 7 disordered regions span residues 92–118 (ARHPDLTPPGSLPNHSATEPNSSTGHG), 176–203 (TGLGRTSDFTGNPSRPQPEQAGFRISSD), 264–283 (RNEERGFVSSRLSSTPEGLS), 432–473 (ASTT…ASIA), 499–554 (SVNT…SSRV), 590–624 (EIHVEDPSSQGTTAGVTSAATSSGAAQAPEAEPNV), and 645–691 (HIGR…QKME). Polar residues-rich tracts occupy residues 104 to 118 (PNHSATEPNSSTGHG), 178 to 189 (LGRTSDFTGNPS), 273 to 283 (SRLSSTPEGLS), 446 to 465 (TQSASVQRNTGESSVNQTTS), and 499 to 523 (SVNTNNEQGSQPASQQHTAPHSTAE). Residues 525-535 (TLHRQSMEDSA) are compositionally biased toward basic and acidic residues. Positions 536–554 (RNGTLPTPNTQQEPSSSRV) are enriched in polar residues. Residues 597–617 (SSQGTTAGVTSAATSSGAAQA) show a composition bias toward low complexity.

As to quaternary structure, interacts with CCAMK. In terms of processing, phosphorylated at the N-terminus by CCAMK. As to expression, highly epressed in roots. Expressed at very low levels in leaves and stems.

It is found in the nucleus. Its function is as follows. Involved in root nodulation. Required for root nodule organogenesis after infection by symbiotic rhizobia. Probably not involved in arbuscular mycorrhizal (AM) symbiosis. Acts downstream of CCAMK. This Lotus japonicus (Lotus corniculatus var. japonicus) protein is Ubiquitin-like domain-containing protein CIP73.